A 327-amino-acid polypeptide reads, in one-letter code: Biotin synthase (327 aa).

The 227-residue stretch at 49–275 (RFGREVSLCS…VNPHAEVRMA (227 aa)) folds into the Radical SAM core domain. The [4Fe-4S] cluster site is built by cysteine 67, cysteine 71, and cysteine 74. Serine 112, cysteine 143, cysteine 203, and arginine 273 together coordinate [2Fe-2S] cluster.

This sequence belongs to the radical SAM superfamily. Biotin synthase family. As to quaternary structure, homodimer. Requires [4Fe-4S] cluster as cofactor. [2Fe-2S] cluster is required as a cofactor.

The catalysed reaction is (4R,5S)-dethiobiotin + (sulfur carrier)-SH + 2 reduced [2Fe-2S]-[ferredoxin] + 2 S-adenosyl-L-methionine = (sulfur carrier)-H + biotin + 2 5'-deoxyadenosine + 2 L-methionine + 2 oxidized [2Fe-2S]-[ferredoxin]. It functions in the pathway cofactor biosynthesis; biotin biosynthesis; biotin from 7,8-diaminononanoate: step 2/2. Functionally, catalyzes the conversion of dethiobiotin (DTB) to biotin by the insertion of a sulfur atom into dethiobiotin via a radical-based mechanism. This is Biotin synthase from Maridesulfovibrio salexigens (strain ATCC 14822 / DSM 2638 / NCIMB 8403 / VKM B-1763) (Desulfovibrio salexigens).